Here is a 76-residue protein sequence, read N- to C-terminus: uncharacterized protein (76 aa).

The helical transmembrane segment at 24–44 threads the bilayer; sequence GAIFLVCYPLYCVVCFVSVLC.

It localises to the membrane. This is an uncharacterized protein from Schizosaccharomyces pombe (strain 972 / ATCC 24843) (Fission yeast).